The primary structure comprises 157 residues: 17.6 kDa class I heat shock protein 3 (157 aa).

The 115-residue stretch at aspartate 43–glycine 157 folds into the sHSP domain.

This sequence belongs to the small heat shock protein (HSP20) family. In terms of assembly, may form oligomeric structures.

It is found in the cytoplasm. The chain is 17.6 kDa class I heat shock protein 3 (HSP17.6C) from Arabidopsis thaliana (Mouse-ear cress).